The sequence spans 79 residues: MSTIEERVKKIVVEQLGVKEEEVTTSASFVDDLGADSLDTVELVMALEEEFECEIPDEEAEKITSVQQAIDYVKSHVKS.

The region spanning Ser-2 to Val-77 is the Carrier domain. Ser-37 is subject to O-(pantetheine 4'-phosphoryl)serine.

Belongs to the acyl carrier protein (ACP) family. In terms of processing, 4'-phosphopantetheine is transferred from CoA to a specific serine of apo-ACP by AcpS. This modification is essential for activity because fatty acids are bound in thioester linkage to the sulfhydryl of the prosthetic group.

The protein resides in the cytoplasm. It functions in the pathway lipid metabolism; fatty acid biosynthesis. Functionally, carrier of the growing fatty acid chain in fatty acid biosynthesis. The polypeptide is Acyl carrier protein (Xanthomonas oryzae pv. oryzae (strain MAFF 311018)).